The following is a 306-amino-acid chain: Immune protein Tsi7 (306 aa).

In terms of assembly, interacts with Tse7.

In terms of biological role, immunity protein that plays a role in preventing early activation of toxin Tse7. Protects thereby cells from Tse7 DNase activity. In Pseudomonas aeruginosa (strain ATCC 15692 / DSM 22644 / CIP 104116 / JCM 14847 / LMG 12228 / 1C / PRS 101 / PAO1), this protein is Immune protein Tsi7.